We begin with the raw amino-acid sequence, 267 residues long: Phosphate import ATP-binding protein PstB 2 (267 aa).

One can recognise an ABC transporter domain in the interval 21–262 (LATKDLHVYY…AQCQSTNDYV (242 aa)). 53–60 (GPSGCGKS) contributes to the ATP binding site.

The protein belongs to the ABC transporter superfamily. Phosphate importer (TC 3.A.1.7) family. The complex is composed of two ATP-binding proteins (PstB), two transmembrane proteins (PstC and PstA) and a solute-binding protein (PstS).

Its subcellular location is the cell membrane. The enzyme catalyses phosphate(out) + ATP + H2O = ADP + 2 phosphate(in) + H(+). In terms of biological role, part of the ABC transporter complex PstSACB involved in phosphate import. Responsible for energy coupling to the transport system. This Streptococcus pyogenes serotype M1 protein is Phosphate import ATP-binding protein PstB 2.